A 627-amino-acid polypeptide reads, in one-letter code: Protein zyg-11 homolog A (627 aa).

3 LRR repeats span residues 123–146, 203–227, and 409–432; these read LPNL…LSCK, LPNL…SFLQ, and ITSI…LIMA.

Belongs to the zyg-11 family.

Probably acts as a target recruitment subunit in an E3 ubiquitin ligase complex ZYGA-CUL2-elongin BC. The polypeptide is Protein zyg-11 homolog A (Zyg11a) (Mus musculus (Mouse)).